The primary structure comprises 492 residues: Bifunctional protein GlmU (492 aa).

Residues 1-241 (MIPENTGPAA…RWQVEGANDR (241 aa)) are pyrophosphorylase. UDP-N-acetyl-alpha-D-glucosamine is bound by residues 14–17 (LAAG), lysine 28, glutamine 81, 86–87 (GT), 112–114 (YGD), glycine 151, glutamate 166, asparagine 181, and asparagine 239. Aspartate 114 is a binding site for Mg(2+). Asparagine 239 is a binding site for Mg(2+). The interval 242 to 262 (VQLAALGAELNRRTVEAWMRA) is linker. An N-acetyltransferase region spans residues 263 to 492 (GVTVVDPSTT…STPASTEEGK (230 aa)). UDP-N-acetyl-alpha-D-glucosamine contacts are provided by arginine 344 and lysine 362. Histidine 374 functions as the Proton acceptor in the catalytic mechanism. The UDP-N-acetyl-alpha-D-glucosamine site is built by tyrosine 377 and asparagine 388. Acetyl-CoA is bound by residues 397 to 398 (NY), serine 416, and alanine 434. The interval 460 to 492 (WVPANRPGSRSAELAQAAINNSSSTPASTEEGK) is disordered. A compositionally biased stretch (polar residues) spans 477–492 (AINNSSSTPASTEEGK).

The protein in the N-terminal section; belongs to the N-acetylglucosamine-1-phosphate uridyltransferase family. It in the C-terminal section; belongs to the transferase hexapeptide repeat family. In terms of assembly, homotrimer. Requires Mg(2+) as cofactor.

The protein resides in the cytoplasm. The catalysed reaction is alpha-D-glucosamine 1-phosphate + acetyl-CoA = N-acetyl-alpha-D-glucosamine 1-phosphate + CoA + H(+). It catalyses the reaction N-acetyl-alpha-D-glucosamine 1-phosphate + UTP + H(+) = UDP-N-acetyl-alpha-D-glucosamine + diphosphate. It participates in nucleotide-sugar biosynthesis; UDP-N-acetyl-alpha-D-glucosamine biosynthesis; N-acetyl-alpha-D-glucosamine 1-phosphate from alpha-D-glucosamine 6-phosphate (route II): step 2/2. Its pathway is nucleotide-sugar biosynthesis; UDP-N-acetyl-alpha-D-glucosamine biosynthesis; UDP-N-acetyl-alpha-D-glucosamine from N-acetyl-alpha-D-glucosamine 1-phosphate: step 1/1. It functions in the pathway bacterial outer membrane biogenesis; LPS lipid A biosynthesis. In terms of biological role, catalyzes the last two sequential reactions in the de novo biosynthetic pathway for UDP-N-acetylglucosamine (UDP-GlcNAc). The C-terminal domain catalyzes the transfer of acetyl group from acetyl coenzyme A to glucosamine-1-phosphate (GlcN-1-P) to produce N-acetylglucosamine-1-phosphate (GlcNAc-1-P), which is converted into UDP-GlcNAc by the transfer of uridine 5-monophosphate (from uridine 5-triphosphate), a reaction catalyzed by the N-terminal domain. This is Bifunctional protein GlmU from Pseudarthrobacter chlorophenolicus (strain ATCC 700700 / DSM 12829 / CIP 107037 / JCM 12360 / KCTC 9906 / NCIMB 13794 / A6) (Arthrobacter chlorophenolicus).